The primary structure comprises 315 residues: Protein sprouty homolog 2 (315 aa).

Residues 1-15 are compositionally biased toward polar residues; that stretch reads MEARAQSGNGSQPLL. Disordered stretches follow at residues 1 to 39 and 51 to 140; these read MEARAQSGNGSQPLLQTPRDGGRQRGEPDPRDALTQQVH and NTNE…GSSF. Residues 20–32 show a composition bias toward basic and acidic residues; sequence DGGRQRGEPDPRD. Residues 108–140 are compositionally biased toward low complexity; that stretch reads SRSISTVSSGSRSSTRTSTSSSSSEQRLLGSSF. The segment at 118–315 is required for interaction with CAV1; sequence SRSSTRTSTS…VPPRNFEKPT (198 aa). In terms of domain architecture, SPR spans 177–291; it reads RCEDCGKCKC…CYDRVNRPGC (115 aa). Residues 178–315 form a required for interaction with TESK1 region; it reads CEDCGKCKCK…VPPRNFEKPT (138 aa).

Belongs to the sprouty family. As to quaternary structure, forms heterodimers with SPRY1. Forms a tripartite complex containing GAB1, METTL13 and SPRY2. Within the complex interacts with METTL13. Interacts with RAF1. Interacts (via C-terminus) with TESK1 (via C-terminus); the interaction disrupts SPRY2 interaction with GRB2, potentially via disruption of SPRY2 serine dephosphorylation. Interacts with PPP2R1A/PP2A-A and PPP2CA/PP2A-C; the interaction with PPP2CA/PP2A-C is inhibited by interaction with TESK1, possibly by vesicular sequestration of SPRY2. Inhibition of the interaction with the serine/threonine-protein phosphatase 2A (PP2A) holoenzyme results in loss of PP2A-mediated dephosphorylation, resulting in the loss of SPRY2 interaction with GRB2. Interacts with GRB2. Interacts with CBL/C-CBL; the interaction inhibits CBL-mediated ubiquitination of EGFR. Interacts (via C-terminus) with CAV1 (via C-terminus). Cleaved at Pro-144 by the prolyl endopeptidase FAP (seprase) activity (in vitro).

The protein localises to the cytoplasm. It is found in the cytoskeleton. It localises to the cell projection. The protein resides in the ruffle membrane. Functionally, antagonist of fibroblast growth factor (FGF) pathways via inhibition of FGF-mediated phosphorylation of ERK1/2. Thereby acts as an antagonist of FGF-induced retinal lens fiber differentiation, may inhibit limb bud outgrowth and may negatively modulate respiratory organogenesis. Inhibits TGFB-induced epithelial-to-mesenchymal transition in retinal lens epithelial cells. Inhibits CBL/C-CBL-mediated EGFR ubiquitination. The polypeptide is Protein sprouty homolog 2 (SPRY2) (Macaca fascicularis (Crab-eating macaque)).